Consider the following 142-residue polypeptide: Large ribosomal subunit protein uL13 (142 aa).

It belongs to the universal ribosomal protein uL13 family. Part of the 50S ribosomal subunit.

In terms of biological role, this protein is one of the early assembly proteins of the 50S ribosomal subunit, although it is not seen to bind rRNA by itself. It is important during the early stages of 50S assembly. The polypeptide is Large ribosomal subunit protein uL13 (Syntrophus aciditrophicus (strain SB)).